The chain runs to 286 residues: Probable aquaporin PIP-type pTOM75 (286 aa).

The tract at residues 1–35 (MAENKEEDVKLGANKFRETQPLGTAAQTDKDYKEP) is disordered. Residues 1–55 (MAENKEEDVKLGANKFRETQPLGTAAQTDKDYKEPPPAPLFEPGELSSWSFYRAG) lie on the Cytoplasmic side of the membrane. Residues 7-18 (EDVKLGANKFRE) show a composition bias toward basic and acidic residues. Residues 56-76 (IAEFMATFLFLYITILTVMGL) traverse the membrane as a helical segment. Topologically, residues 77 to 89 (KRSDSLCSSVGIQ) are extracellular. A helical transmembrane segment spans residues 90–110 (GVAWAFGGMIFALVYCTAGIS). Residues 111 to 133 (GGHINPAVTFGLFLARKLSLTRA) lie on the Cytoplasmic side of the membrane. Residues 115–117 (NPA) carry the NPA 1 motif. Residues 134-154 (VFYMVMQCLGAICGAGVVKGF) form a helical membrane-spanning segment. Residues 155-175 (MVGPYQRLGGGANVVNPGYTK) are Extracellular-facing. A helical transmembrane segment spans residues 176-196 (GDGLGAEIIGTFVLVYTVFSA). At 197-209 (TDAKRNARDSHVP) the chain is on the cytoplasmic side. Residues 210 to 230 (ILAPLPIGFAVFLVHLATIPI) traverse the membrane as a helical segment. Over 231-257 (TGTGINPARSLGAAIIYNDEHAWNDHW) the chain is Extracellular. The short motif at 236 to 238 (NPA) is the NPA 2 element. Residues 258-278 (IFWVGPMIGAALAAIYHQIII) form a helical membrane-spanning segment. Topologically, residues 279 to 286 (RAMPFHRS) are cytoplasmic.

Belongs to the MIP/aquaporin (TC 1.A.8) family. PIP (TC 1.A.8.11) subfamily. As to expression, roots, ripening fruit and senescing leaves.

The protein resides in the cell membrane. In terms of biological role, aquaporins facilitate the transport of water and small neutral solutes across cell membranes. The protein is Probable aquaporin PIP-type pTOM75 of Solanum lycopersicum (Tomato).